Consider the following 272-residue polypeptide: 3-methyl-2-oxobutanoate hydroxymethyltransferase (272 aa).

Residues Asp51 and Asp90 each contribute to the Mg(2+) site. 3-methyl-2-oxobutanoate-binding positions include 51–52 (DS), Asp90, and Lys118. A Mg(2+)-binding site is contributed by Glu120. Catalysis depends on Glu187, which acts as the Proton acceptor.

The protein belongs to the PanB family. In terms of assembly, homodecamer; pentamer of dimers. Mg(2+) serves as cofactor.

It localises to the cytoplasm. It catalyses the reaction 3-methyl-2-oxobutanoate + (6R)-5,10-methylene-5,6,7,8-tetrahydrofolate + H2O = 2-dehydropantoate + (6S)-5,6,7,8-tetrahydrofolate. Its pathway is cofactor biosynthesis; (R)-pantothenate biosynthesis; (R)-pantoate from 3-methyl-2-oxobutanoate: step 1/2. Its function is as follows. Catalyzes the reversible reaction in which hydroxymethyl group from 5,10-methylenetetrahydrofolate is transferred onto alpha-ketoisovalerate to form ketopantoate. The protein is 3-methyl-2-oxobutanoate hydroxymethyltransferase of Xylella fastidiosa (strain M12).